The primary structure comprises 451 residues: Tubulin beta-1 chain (451 aa).

Residues 1 to 4 (MREI) carry the MREI motif motif. GTP is bound by residues Gln-11, Glu-69, Ser-138, Gly-142, Thr-143, and Gly-144. Mg(2+) is bound at residue Glu-69. At Ser-172 the chain carries Phosphoserine; by CDK1. 2 residues coordinate GTP: Asn-204 and Asn-226. Residues 432–451 (LEEDEEVTEEAEMEPEDKGH) are disordered. A compositionally biased stretch (acidic residues) spans 433-451 (EEDEEVTEEAEMEPEDKGH). At Glu-440 the chain carries 5-glutamyl polyglutamate.

Belongs to the tubulin family. Dimer of alpha and beta chains. A typical microtubule is a hollow water-filled tube with an outer diameter of 25 nm and an inner diameter of 15 nM. Alpha-beta heterodimers associate head-to-tail to form protofilaments running lengthwise along the microtubule wall with the beta-tubulin subunit facing the microtubule plus end conferring a structural polarity. Microtubules usually have 13 protofilaments but different protofilament numbers can be found in some organisms and specialized cells. Interacts with RANBP10. The cofactor is Mg(2+). Post-translationally, some glutamate residues at the C-terminus are polyglutamylated, resulting in polyglutamate chains on the gamma-carboxyl group. Polyglutamylation plays a key role in microtubule severing by spastin (SPAST). SPAST preferentially recognizes and acts on microtubules decorated with short polyglutamate tails: severing activity by SPAST increases as the number of glutamates per tubulin rises from one to eight, but decreases beyond this glutamylation threshold. Glutamylation is also involved in cilia motility. In terms of processing, some glutamate residues at the C-terminus are monoglycylated but not polyglycylated due to the absence of functional TTLL10 in human. Monoglycylation is mainly limited to tubulin incorporated into cilia and flagella axonemes, which is required for their stability and maintenance. Flagella glycylation controls sperm motility. Both polyglutamylation and monoglycylation can coexist on the same protein on adjacent residues, and lowering glycylation levels increases polyglutamylation, and reciprocally. Phosphorylated on Ser-172 by CDK1 during the cell cycle, from metaphase to telophase, but not in interphase. This phosphorylation inhibits tubulin incorporation into microtubules. As to expression, hematopoietic cell-specific. Major isotype in leukocytes, where it represents 50% of all beta-tubulins.

It localises to the cytoplasm. The protein localises to the cytoskeleton. Its function is as follows. Tubulin is the major constituent of microtubules, a cylinder consisting of laterally associated linear protofilaments composed of alpha- and beta-tubulin heterodimers. Microtubules grow by the addition of GTP-tubulin dimers to the microtubule end, where a stabilizing cap forms. Below the cap, tubulin dimers are in GDP-bound state, owing to GTPase activity of alpha-tubulin. The polypeptide is Tubulin beta-1 chain (TUBB1) (Homo sapiens (Human)).